The chain runs to 437 residues: Enolase 2 (437 aa).

Q162 is a binding site for (2R)-2-phosphoglycerate. The active-site Proton donor is the E204. Mg(2+) is bound by residues D251, E297, and D324. 4 residues coordinate (2R)-2-phosphoglycerate: K349, R378, S379, and K400. Residue K349 is the Proton acceptor of the active site.

Belongs to the enolase family. Mg(2+) serves as cofactor.

Its subcellular location is the cytoplasm. It is found in the secreted. It localises to the cell surface. It catalyses the reaction (2R)-2-phosphoglycerate = phosphoenolpyruvate + H2O. The protein operates within carbohydrate degradation; glycolysis; pyruvate from D-glyceraldehyde 3-phosphate: step 4/5. Catalyzes the reversible conversion of 2-phosphoglycerate (2-PG) into phosphoenolpyruvate (PEP). It is essential for the degradation of carbohydrates via glycolysis. This chain is Enolase 2, found in Chlorobaculum tepidum (strain ATCC 49652 / DSM 12025 / NBRC 103806 / TLS) (Chlorobium tepidum).